Consider the following 198-residue polypeptide: Dermorphin-2 (198 aa).

The signal sequence occupies residues 1-20 (MSFLKKSLLLILFLGLVSLS). The propeptide occupies 21 to 45 (VCKEEKRVSEEENENEENHEEGSEM). The disordered stretch occupies residues 24–198 (EEKRVSEEEN…AFGYPSGEAK (175 aa)). Position 49 is a D-alanine (Ala) (alanine 49). Serine 54 is subject to Serine amide. Residues 56 to 65 (EAKKIKRESE) are compositionally biased toward basic and acidic residues. The propeptide occupies 56-80 (EAKKIKRESEEEKEIEENHEEGSEM). Alanine 84 carries the post-translational modification D-alanine (Ala). Serine 89 bears the Serine amide mark. Residues 91 to 115 (EAKKIKRESEEENENEENHEEGSEM) constitute a propeptide that is removed on maturation. Acidic residues predominate over residues 100–109 (EEENENEENH). Alanine 119 is modified (D-alanine (Ala)). The residue at position 124 (serine 124) is a Serine amide. Residues 126–135 (EAKKIKRESE) are compositionally biased toward basic and acidic residues. Residues 126-150 (EAKKIKRESEEEKEIEENHEEGSEM) constitute a propeptide that is removed on maturation. Residue alanine 154 is modified to D-alanine (Ala). Position 159 is a serine amide (serine 159). Positions 161 to 185 (EAKKIKRESEEENENEENHEEGSEM) are excised as a propeptide. A compositionally biased stretch (acidic residues) spans 170-179 (EEENENEENH). D-alanine (Ala) is present on alanine 189. Residue serine 194 is modified to Serine amide. The propeptide occupies 196-198 (EAK).

It belongs to the frog skin active peptide (FSAP) family. Dermorphin subfamily. Expressed by the skin glands.

The protein localises to the secreted. Functionally, dermorphin has a very potent opiate-like activity. It has high affinity and selectivity for mu-type opioid receptors. In Phyllomedusa sauvagei (Sauvage's leaf frog), this protein is Dermorphin-2.